The following is a 298-amino-acid chain: (DL)-glycerol-3-phosphatase 1, mitochondrial (298 aa).

The transit peptide at 1-46 (MLTTPTRFVALRIPFRSSNKIPISIAPSPKVFPRKPVIRVPASLRF) directs the protein to the mitochondrion. D77 (nucleophile) is an active-site residue. The Mg(2+) site is built by D77, D79, and D242. D79 acts as the Proton donor in catalysis.

This sequence belongs to the HAD-like hydrolase superfamily. DOG/GPP family. It depends on Mg(2+) as a cofactor. In terms of tissue distribution, ubiquitous with highest expression in siliques. Mainly restricted to the meristem of immature flower and vascular elements of the root, shoot, leave, siliqua and developing embryo (at the protein level).

The protein resides in the mitochondrion. The catalysed reaction is sn-glycerol 1-phosphate + H2O = glycerol + phosphate. It catalyses the reaction sn-glycerol 3-phosphate + H2O = glycerol + phosphate. It carries out the reaction 5-amino-6-(5-phospho-D-ribitylamino)uracil + H2O = 5-amino-6-(D-ribitylamino)uracil + phosphate. Its function is as follows. Acts as a glycerol-3-phosphatase with higher stereospecificity for L-glycerol-3-phosphate than DL-glycerol-3-phosphate. Can also dephosphorylate in vitro 5-amino-6-(5-phospho-D-ribitylamino)uracil, also known as ARPP. The protein is (DL)-glycerol-3-phosphatase 1, mitochondrial of Arabidopsis thaliana (Mouse-ear cress).